The sequence spans 338 residues: D-erythrose-4-phosphate dehydrogenase (338 aa).

An NAD(+)-binding site is contributed by 11–12 (RI). Substrate is bound by residues 153–155 (SCT), arginine 199, 212–213 (TK), and arginine 235. Cysteine 154 acts as the Nucleophile in catalysis. Asparagine 317 serves as a coordination point for NAD(+).

This sequence belongs to the glyceraldehyde-3-phosphate dehydrogenase family. Epd subfamily. Homotetramer.

It is found in the cytoplasm. It carries out the reaction D-erythrose 4-phosphate + NAD(+) + H2O = 4-phospho-D-erythronate + NADH + 2 H(+). It participates in cofactor biosynthesis; pyridoxine 5'-phosphate biosynthesis; pyridoxine 5'-phosphate from D-erythrose 4-phosphate: step 1/5. Its function is as follows. Catalyzes the NAD-dependent conversion of D-erythrose 4-phosphate to 4-phosphoerythronate. This chain is D-erythrose-4-phosphate dehydrogenase, found in Shewanella oneidensis (strain ATCC 700550 / JCM 31522 / CIP 106686 / LMG 19005 / NCIMB 14063 / MR-1).